The chain runs to 341 residues: Malate dehydrogenase 2, mitochondrial (341 aa).

A mitochondrion-targeting transit peptide spans 1-22 (MFRSMIVRSASPVKQGLLRRGF). Residues 36 to 42 (GAAGGIG) and Asp62 contribute to the NAD(+) site. The substrate site is built by Arg109 and Arg115. Residues Asn122 and 145–147 (ISN) contribute to the NAD(+) site. Residues Asn147 and Arg181 each coordinate substrate. Residue His205 is the Proton acceptor of the active site. Met256 is a binding site for NAD(+).

Belongs to the LDH/MDH superfamily. MDH type 1 family. Homodimer. Expressed in rosette leaves at low levels.

The protein localises to the mitochondrion matrix. It catalyses the reaction (S)-malate + NAD(+) = oxaloacetate + NADH + H(+). Its function is as follows. Catalyzes a reversible NAD-dependent dehydrogenase reaction involved in central metabolism and redox homeostasis between organelle compartments. Required for carbon dioxide and energy partitioning in leaves. May limit photorespiration during the dark phase. Can convert 2-ketoglutarate to L-2-hydroxyglutarate in vitro. This Arabidopsis thaliana (Mouse-ear cress) protein is Malate dehydrogenase 2, mitochondrial.